The chain runs to 653 residues: Choline transporter-like protein 3 (653 aa).

The helical transmembrane segment at 34 to 54 threads the bilayer; the sequence is WLFLFFLFWTGLVFIMGYSVV. Asn-136 and Asn-151 each carry an N-linked (GlcNAc...) asparagine glycan. The next 5 membrane-spanning stretches (helical) occupy residues 213 to 233, 243 to 263, 284 to 304, 334 to 354, and 384 to 404; these read DTIL…MFTF, IFIS…WWLY, VLGF…LIFV, LWTF…LLSL, and LIGL…TIAG. N-linked (GlcNAc...) asparagine glycosylation is found at Asn-412, Asn-503, and Asn-521. 2 consecutive transmembrane segments (helical) span residues 534–554 and 563–583; these read FIIF…GLMA and VWAV…HSFL. Residues 632–653 form a disordered region; sequence RAQQDKHSLRNEEGTELQAIVR. The span at 634-644 shows a compositional bias: basic and acidic residues; it reads QQDKHSLRNEE.

Belongs to the CTL (choline transporter-like) family.

The protein resides in the membrane. The protein is Choline transporter-like protein 3 (SLC44A3) of Homo sapiens (Human).